We begin with the raw amino-acid sequence, 277 residues long: Heme oxygenase (277 aa).

H29 is a heme b binding site.

Belongs to the heme oxygenase family.

The protein resides in the microsome. It localises to the endoplasmic reticulum. It carries out the reaction heme b + 3 reduced [NADPH--hemoprotein reductase] + 3 O2 = biliverdin IXalpha + CO + Fe(2+) + 3 oxidized [NADPH--hemoprotein reductase] + 3 H2O + H(+). Its function is as follows. Heme oxygenase cleaves the heme ring at the alpha methene bridge to form biliverdin. Biliverdin is subsequently converted to bilirubin by biliverdin reductase. Under physiological conditions, the activity of heme oxygenase is highest in the spleen, where senescent erythrocytes are sequestrated and destroyed. This is Heme oxygenase (hmox) from Takifugu rubripes (Japanese pufferfish).